We begin with the raw amino-acid sequence, 972 residues long: Serine/threonine-protein kinase ATG1 (972 aa).

Residues 18 to 319 enclose the Protein kinase domain; sequence YVVEKEIGRG…FTEFFSNGLV (302 aa). ATP is bound by residues 24–32 and lysine 48; that span reads IGRGSFAVV. Aspartate 166 acts as the Proton acceptor in catalysis. Disordered regions lie at residues 359-394, 424-444, 467-506, 562-605, and 743-764; these read KRASPIRLGDSCTLRGPCESPQGADPYPQDNTQSDQ, YNNQEERSNEERQFGQVSNGR, ALQSHSHVAAKQIPDKDSKSSVSCQKHAASAPTKNDHRTT, ASQA…SRRP, and DDEEDDIEHSPGAETYRKNSSG. The segment covering 424 to 436 has biased composition (basic and acidic residues); that stretch reads YNNQEERSNEERQ. Over residues 562–584 the composition is skewed to polar residues; that stretch reads ASQALQMARHSSTSVSAANTAKQ. Positions 585 to 605 are enriched in low complexity; the sequence is TLLRRNSRTLSSSGASTSRRP. Basic and acidic residues predominate over residues 750-759; the sequence is EHSPGAETYR.

The protein belongs to the protein kinase superfamily. Ser/Thr protein kinase family. APG1/unc-51/ULK1 subfamily. Homodimer. Forms a ternary complex with ATG13 and ATG17.

It is found in the cytoplasm. The protein resides in the preautophagosomal structure membrane. The catalysed reaction is L-seryl-[protein] + ATP = O-phospho-L-seryl-[protein] + ADP + H(+). It catalyses the reaction L-threonyl-[protein] + ATP = O-phospho-L-threonyl-[protein] + ADP + H(+). Serine/threonine protein kinase involved in the cytoplasm to vacuole transport (Cvt) and found to be essential in autophagy, where it is required for the formation of autophagosomes. Involved in the clearance of protein aggregates which cannot be efficiently cleared by the proteasome. Required for selective autophagic degradation of the nucleus (nucleophagy) as well as for mitophagy which contributes to regulate mitochondrial quantity and quality by eliminating the mitochondria to a basal level to fulfill cellular energy requirements and preventing excess ROS production. Also involved in endoplasmic reticulum-specific autophagic process, in selective removal of ER-associated degradation (ERAD) substrates. Plays a key role in ATG9 and ATG23 cycling through the pre-autophagosomal structure and is necessary to promote ATG18 binding to ATG9 through phosphorylation of ATG9. Catalyzes phosphorylation of ATG4, decreasing the interaction between ATG4 and ATG8 and impairing deconjugation of PE-conjugated forms of ATG8. This chain is Serine/threonine-protein kinase ATG1, found in Eremothecium gossypii (strain ATCC 10895 / CBS 109.51 / FGSC 9923 / NRRL Y-1056) (Yeast).